A 212-amino-acid polypeptide reads, in one-letter code: Probable nicotinate-nucleotide adenylyltransferase (212 aa).

Belongs to the NadD family.

It carries out the reaction nicotinate beta-D-ribonucleotide + ATP + H(+) = deamido-NAD(+) + diphosphate. It participates in cofactor biosynthesis; NAD(+) biosynthesis; deamido-NAD(+) from nicotinate D-ribonucleotide: step 1/1. Functionally, catalyzes the reversible adenylation of nicotinate mononucleotide (NaMN) to nicotinic acid adenine dinucleotide (NaAD). The sequence is that of Probable nicotinate-nucleotide adenylyltransferase from Saccharopolyspora erythraea (strain ATCC 11635 / DSM 40517 / JCM 4748 / NBRC 13426 / NCIMB 8594 / NRRL 2338).